We begin with the raw amino-acid sequence, 118 residues long: Holo-[acyl-carrier-protein] synthase (118 aa).

Positions 8 and 58 each coordinate Mg(2+).

Belongs to the P-Pant transferase superfamily. AcpS family. Requires Mg(2+) as cofactor.

The protein localises to the cytoplasm. The catalysed reaction is apo-[ACP] + CoA = holo-[ACP] + adenosine 3',5'-bisphosphate + H(+). Functionally, transfers the 4'-phosphopantetheine moiety from coenzyme A to a Ser of acyl-carrier-protein. The chain is Holo-[acyl-carrier-protein] synthase from Listeria innocua serovar 6a (strain ATCC BAA-680 / CLIP 11262).